The chain runs to 131 residues: Small ribosomal subunit protein bS6m (131 aa).

It belongs to the bacterial ribosomal protein bS6 family. As to quaternary structure, component of the mitochondrial small ribosomal subunit (mt-SSU). Mature yeast 74S mitochondrial ribosomes consist of a small (37S) and a large (54S) subunit. The 37S small subunit contains a 15S ribosomal RNA (15S mt-rRNA) and 34 different proteins. The 54S large subunit contains a 21S rRNA (21S mt-rRNA) and 46 different proteins.

The protein resides in the mitochondrion. Functionally, component of the mitochondrial ribosome (mitoribosome), a dedicated translation machinery responsible for the synthesis of mitochondrial genome-encoded proteins, including at least some of the essential transmembrane subunits of the mitochondrial respiratory chain. The mitoribosomes are attached to the mitochondrial inner membrane and translation products are cotranslationally integrated into the membrane. The polypeptide is Small ribosomal subunit protein bS6m (MRP17) (Saccharomyces cerevisiae (strain ATCC 204508 / S288c) (Baker's yeast)).